A 116-amino-acid polypeptide reads, in one-letter code: uncharacterized protein (116 aa).

Residues 1–19 (MRWDVIILYAISRPYATRR) form the signal peptide. The tract at residues 18-50 (RRTGSHTHPRDSRYIAANQRRPPSACRVGPSPA) is disordered.

This is an uncharacterized protein from Saccharomyces cerevisiae (strain ATCC 204508 / S288c) (Baker's yeast).